The chain runs to 284 residues: Bifunctional protein FolD (284 aa).

NADP(+) is bound by residues 166–168 (GAS) and isoleucine 232.

This sequence belongs to the tetrahydrofolate dehydrogenase/cyclohydrolase family. In terms of assembly, homodimer.

The catalysed reaction is (6R)-5,10-methylene-5,6,7,8-tetrahydrofolate + NADP(+) = (6R)-5,10-methenyltetrahydrofolate + NADPH. The enzyme catalyses (6R)-5,10-methenyltetrahydrofolate + H2O = (6R)-10-formyltetrahydrofolate + H(+). Its pathway is one-carbon metabolism; tetrahydrofolate interconversion. Catalyzes the oxidation of 5,10-methylenetetrahydrofolate to 5,10-methenyltetrahydrofolate and then the hydrolysis of 5,10-methenyltetrahydrofolate to 10-formyltetrahydrofolate. This is Bifunctional protein FolD from Shewanella halifaxensis (strain HAW-EB4).